We begin with the raw amino-acid sequence, 381 residues long: 4-hydroxy-3-methylbut-2-en-1-yl diphosphate synthase (flavodoxin) (381 aa).

[4Fe-4S] cluster is bound by residues Cys280, Cys283, Cys315, and Glu322.

Belongs to the IspG family. [4Fe-4S] cluster is required as a cofactor.

It catalyses the reaction (2E)-4-hydroxy-3-methylbut-2-enyl diphosphate + oxidized [flavodoxin] + H2O + 2 H(+) = 2-C-methyl-D-erythritol 2,4-cyclic diphosphate + reduced [flavodoxin]. Its pathway is isoprenoid biosynthesis; isopentenyl diphosphate biosynthesis via DXP pathway; isopentenyl diphosphate from 1-deoxy-D-xylulose 5-phosphate: step 5/6. In terms of biological role, converts 2C-methyl-D-erythritol 2,4-cyclodiphosphate (ME-2,4cPP) into 1-hydroxy-2-methyl-2-(E)-butenyl 4-diphosphate. The polypeptide is 4-hydroxy-3-methylbut-2-en-1-yl diphosphate synthase (flavodoxin) (Clavibacter michiganensis subsp. michiganensis (strain NCPPB 382)).